The primary structure comprises 421 residues: Elongation factor 1-alpha (421 aa).

Residues 4–220 (NRHQNLAVIG…NGLPVPQPPT (217 aa)) enclose the tr-type G domain. The interval 13–20 (GHVDHGKS) is G1. Residue 13 to 20 (GHVDHGKS) coordinates GTP. Serine 20 provides a ligand contact to Mg(2+). The G2 stretch occupies residues 69-73 (GVTID). The G3 stretch occupies residues 90–93 (DCPG). GTP contacts are provided by residues 90-94 (DCPGH) and 145-148 (NKMD). The segment at 145-148 (NKMD) is G4. Positions 184 to 186 (SAF) are G5.

The protein belongs to the TRAFAC class translation factor GTPase superfamily. Classic translation factor GTPase family. EF-Tu/EF-1A subfamily.

The protein resides in the cytoplasm. The enzyme catalyses GTP + H2O = GDP + phosphate + H(+). Functionally, GTP hydrolase that promotes the GTP-dependent binding of aminoacyl-tRNA to the A-site of ribosomes during protein biosynthesis. This Halobacterium salinarum (strain ATCC 700922 / JCM 11081 / NRC-1) (Halobacterium halobium) protein is Elongation factor 1-alpha.